The primary structure comprises 249 residues: AA9 family lytic polysaccharide monooxygenase cel61B (249 aa).

An N-terminal signal peptide occupies residues 1-19; sequence MKSCAILAALGCLAGSVLG. A Cu(2+)-binding site is contributed by His20. A glycan (N-linked (GlcNAc...) asparagine) is linked at Asn25. 2 cysteine pairs are disulfide-bonded: Cys78–Cys198 and Cys120–Cys124. Position 108 (His108) interacts with Cu(2+). The O2 site is built by His184 and Gln193. Tyr195 is a Cu(2+) binding site.

It belongs to the polysaccharide monooxygenase AA9 family. In terms of assembly, monomer. Cu(2+) is required as a cofactor.

It localises to the secreted. The catalysed reaction is [(1-&gt;4)-beta-D-glucosyl]n+m + reduced acceptor + O2 = 4-dehydro-beta-D-glucosyl-[(1-&gt;4)-beta-D-glucosyl]n-1 + [(1-&gt;4)-beta-D-glucosyl]m + acceptor + H2O.. In terms of biological role, lytic polysaccharide monooxygenase (LPMO) that depolymerizes crystalline and amorphous polysaccharides via the oxidation of scissile alpha- or beta-(1-4)-glycosidic bonds, yielding C1 or C4 oxidation products. Catalysis by LPMOs requires the reduction of the active-site copper from Cu(II) to Cu(I) by a reducing agent and H(2)O(2) or O(2) as a cosubstrate. This Hypocrea jecorina (strain QM6a) (Trichoderma reesei) protein is AA9 family lytic polysaccharide monooxygenase cel61B.